A 328-amino-acid polypeptide reads, in one-letter code: tRNA dimethylallyltransferase (328 aa).

Position 23 to 30 (23 to 30) interacts with ATP; that stretch reads GPTASGKS. 25-30 lines the substrate pocket; it reads TASGKS. Residues 48–51 form an interaction with substrate tRNA region; the sequence is DSMQ.

The protein belongs to the IPP transferase family. Monomer. It depends on Mg(2+) as a cofactor.

The catalysed reaction is adenosine(37) in tRNA + dimethylallyl diphosphate = N(6)-dimethylallyladenosine(37) in tRNA + diphosphate. In terms of biological role, catalyzes the transfer of a dimethylallyl group onto the adenine at position 37 in tRNAs that read codons beginning with uridine, leading to the formation of N6-(dimethylallyl)adenosine (i(6)A). The protein is tRNA dimethylallyltransferase of Rhodopseudomonas palustris (strain BisA53).